Here is a 549-residue protein sequence, read N- to C-terminus: Glucose-6-phosphate isomerase (549 aa).

E355 functions as the Proton donor in the catalytic mechanism. Residues H386 and K514 contribute to the active site.

The protein belongs to the GPI family.

It localises to the cytoplasm. It catalyses the reaction alpha-D-glucose 6-phosphate = beta-D-fructose 6-phosphate. It functions in the pathway carbohydrate biosynthesis; gluconeogenesis. The protein operates within carbohydrate degradation; glycolysis; D-glyceraldehyde 3-phosphate and glycerone phosphate from D-glucose: step 2/4. Catalyzes the reversible isomerization of glucose-6-phosphate to fructose-6-phosphate. The protein is Glucose-6-phosphate isomerase of Desulfatibacillum aliphaticivorans.